A 518-amino-acid chain; its full sequence is Probable bifunctional methylthioribulose-1-phosphate dehydratase/enolase-phosphatase E1 (518 aa).

Residues 1 to 242 (MACCGGGRGE…AIKLYQLGID (242 aa)) form a methylthioribulose-1-phosphate dehydratase region. A substrate-binding site is contributed by Cys114. Zn(2+) contacts are provided by His132 and His134. Glu157 serves as the catalytic Proton donor/acceptor; for methylthioribulose-1-phosphate dehydratase activity. Position 207 (His207) interacts with Zn(2+). The interval 279 to 518 (VVLDIEGTTT…FRTIKSFSEI (240 aa)) is enolase-phosphatase E1. Mg(2+) is bound by residues Asp282 and Glu284. Substrate is bound by residues 417-418 (SS) and Lys451. Asp477 is a binding site for Mg(2+).

It in the N-terminal section; belongs to the aldolase class II family. MtnB subfamily. In the C-terminal section; belongs to the HAD-like hydrolase superfamily. MasA/MtnC family. It depends on Zn(2+) as a cofactor. Requires Mg(2+) as cofactor.

The catalysed reaction is 5-(methylsulfanyl)-D-ribulose 1-phosphate = 5-methylsulfanyl-2,3-dioxopentyl phosphate + H2O. It carries out the reaction 5-methylsulfanyl-2,3-dioxopentyl phosphate + H2O = 1,2-dihydroxy-5-(methylsulfanyl)pent-1-en-3-one + phosphate. It participates in amino-acid biosynthesis; L-methionine biosynthesis via salvage pathway; L-methionine from S-methyl-5-thio-alpha-D-ribose 1-phosphate: step 2/6. The protein operates within amino-acid biosynthesis; L-methionine biosynthesis via salvage pathway; L-methionine from S-methyl-5-thio-alpha-D-ribose 1-phosphate: step 3/6. Its pathway is amino-acid biosynthesis; L-methionine biosynthesis via salvage pathway; L-methionine from S-methyl-5-thio-alpha-D-ribose 1-phosphate: step 4/6. The polypeptide is Probable bifunctional methylthioribulose-1-phosphate dehydratase/enolase-phosphatase E1 (Oryza sativa subsp. indica (Rice)).